The primary structure comprises 315 residues: L-lactate dehydrogenase (315 aa).

NAD(+) is bound by residues valine 16, aspartate 37, and 81-82; that span reads GA. Substrate is bound by residues glutamine 84, arginine 90, and 122-125; that span reads NPVD. NAD(+) contacts are provided by residues 120–122 and serine 145; that span reads VSN. Residue 150–153 coordinates substrate; that stretch reads DTAR. Residues arginine 155 and histidine 170 each coordinate beta-D-fructose 1,6-bisphosphate. Histidine 177 (proton acceptor) is an active-site residue. Tyrosine 224 is subject to Phosphotyrosine. Residue threonine 233 participates in substrate binding.

It belongs to the LDH/MDH superfamily. LDH family. As to quaternary structure, homotetramer.

The protein resides in the cytoplasm. The catalysed reaction is (S)-lactate + NAD(+) = pyruvate + NADH + H(+). The protein operates within fermentation; pyruvate fermentation to lactate; (S)-lactate from pyruvate: step 1/1. Allosterically activated by fructose 1,6-bisphosphate (FBP). Its function is as follows. Catalyzes the conversion of lactate to pyruvate. The sequence is that of L-lactate dehydrogenase from Treponema denticola (strain ATCC 35405 / DSM 14222 / CIP 103919 / JCM 8153 / KCTC 15104).